A 404-amino-acid polypeptide reads, in one-letter code: Cysteine desulfurase IscS (404 aa).

Pyridoxal 5'-phosphate-binding positions include 75-76 (AT), N155, Q183, and 203-205 (SAH). An N6-(pyridoxal phosphate)lysine modification is found at K206. A pyridoxal 5'-phosphate-binding site is contributed by T243. C328 functions as the Cysteine persulfide intermediate in the catalytic mechanism. C328 is a [2Fe-2S] cluster binding site.

This sequence belongs to the class-V pyridoxal-phosphate-dependent aminotransferase family. NifS/IscS subfamily. In terms of assembly, homodimer. Forms a heterotetramer with IscU, interacts with other sulfur acceptors. Requires pyridoxal 5'-phosphate as cofactor.

It localises to the cytoplasm. The catalysed reaction is (sulfur carrier)-H + L-cysteine = (sulfur carrier)-SH + L-alanine. Its pathway is cofactor biosynthesis; iron-sulfur cluster biosynthesis. In terms of biological role, master enzyme that delivers sulfur to a number of partners involved in Fe-S cluster assembly, tRNA modification or cofactor biosynthesis. Catalyzes the removal of elemental sulfur atoms from cysteine to produce alanine. Functions as a sulfur delivery protein for Fe-S cluster synthesis onto IscU, an Fe-S scaffold assembly protein, as well as other S acceptor proteins. In Pseudomonas fluorescens (strain Pf0-1), this protein is Cysteine desulfurase IscS.